A 453-amino-acid polypeptide reads, in one-letter code: TATA box-binding protein-associated factor RNA polymerase I subunit A (453 aa).

As to quaternary structure, component of the transcription factor SL1/TIF-IB complex, composed of TBP and at least TAF1A, TAF1B, TAF1C and TAF1D. In the complex interacts directly with TBP, TAF1A and TAF1B. Interaction of the SL1/TIF-IB subunits with TBP excludes interaction of TBP with the transcription factor IID (TFIID) subunits. Interacts with UBFT. Interacts with CEBPA (isoform 1 and isoform 4). Part of Pol I pre-initiation complex (PIC), in which Pol I core assembles with RRN3 and promoter-bound UTBF and SL1/TIF-IB complex.

It is found in the nucleus. The protein resides in the nucleolus. Component of the transcription factor SL1/TIF-IB complex, which is involved in the assembly of the PIC (pre-initiation complex) during RNA polymerase I-dependent transcription. The rate of PIC formation probably is primarily dependent on the rate of association of SL1/TIF-IB with the rDNA promoter. SL1/TIF-IB is involved in stabilization of nucleolar transcription factor 1/UBTF on rDNA. Formation of SL1/TIF-IB excludes the association of TBP with TFIID subunits. In Mus musculus (Mouse), this protein is TATA box-binding protein-associated factor RNA polymerase I subunit A (Taf1a).